The chain runs to 79 residues: NADH-ubiquinone oxidoreductase chain 4 (79 aa).

A run of 2 helical transmembrane segments spans residues serine 24–isoleucine 44 and leucine 54–leucine 74.

It belongs to the complex I subunit 4 family.

The protein localises to the mitochondrion membrane. It catalyses the reaction a ubiquinone + NADH + 5 H(+)(in) = a ubiquinol + NAD(+) + 4 H(+)(out). In terms of biological role, core subunit of the mitochondrial membrane respiratory chain NADH dehydrogenase (Complex I) that is believed to belong to the minimal assembly required for catalysis. Complex I functions in the transfer of electrons from NADH to the respiratory chain. The immediate electron acceptor for the enzyme is believed to be ubiquinone. The chain is NADH-ubiquinone oxidoreductase chain 4 (ND4) from Simulium vittatum (Striped black fly).